Consider the following 180-residue polypeptide: Probable chorismate pyruvate-lyase (180 aa).

Residues arginine 76, leucine 113, and glutamate 171 each contribute to the substrate site.

Belongs to the UbiC family.

It is found in the cytoplasm. It carries out the reaction chorismate = 4-hydroxybenzoate + pyruvate. It functions in the pathway cofactor biosynthesis; ubiquinone biosynthesis. In terms of biological role, removes the pyruvyl group from chorismate, with concomitant aromatization of the ring, to provide 4-hydroxybenzoate (4HB) for the ubiquinone pathway. The polypeptide is Probable chorismate pyruvate-lyase (Pseudoalteromonas translucida (strain TAC 125)).